We begin with the raw amino-acid sequence, 504 residues long: Beta-xylosidase (504 aa).

Glu160 functions as the Proton donor in the catalytic mechanism. Glu280 (nucleophile) is an active-site residue.

It belongs to the glycosyl hydrolase 39 family.

The catalysed reaction is Hydrolysis of (1-&gt;4)-beta-D-xylans, to remove successive D-xylose residues from the non-reducing termini.. This chain is Beta-xylosidase (xynB), found in Geobacillus stearothermophilus (Bacillus stearothermophilus).